We begin with the raw amino-acid sequence, 237 residues long: Uridylate kinase (237 aa).

An ATP-binding site is contributed by 11-14 (KLSG). Gly53 contacts UMP. 2 residues coordinate ATP: Gly54 and Arg58. UMP contacts are provided by residues Asp73 and 134–141 (TGNPFFTT). Thr161, Tyr167, and Asp170 together coordinate ATP.

This sequence belongs to the UMP kinase family. As to quaternary structure, homohexamer.

It localises to the cytoplasm. The catalysed reaction is UMP + ATP = UDP + ADP. It participates in pyrimidine metabolism; CTP biosynthesis via de novo pathway; UDP from UMP (UMPK route): step 1/1. Inhibited by UTP. Catalyzes the reversible phosphorylation of UMP to UDP. The sequence is that of Uridylate kinase from Burkholderia thailandensis (strain ATCC 700388 / DSM 13276 / CCUG 48851 / CIP 106301 / E264).